The primary structure comprises 353 residues: Polyprenal reductase 2 (353 aa).

The next 6 helical transmembrane spans lie at 11–31 (PLLCFAWIAATLPIIAAALPI), 78–98 (FMHFYVVGVLATTILLLAIWF), 175–195 (MHIVGYLTGLFYYVAAPLSLA), 234–254 (PLLKLGWTQWIGAVIFIWGSL), 291–308 (YLAELVIYFGMLVASGAE), and 313–335 (WFLFIFLITNLSFAAVETYNWYL).

It belongs to the steroid 5-alpha reductase family. Polyprenal reductase subfamily.

The protein resides in the cell membrane. It catalyses the reaction a di-trans,poly-cis-dolichal + NADP(+) = a di-trans,poly-cis-polyprenal + NADPH + H(+). It participates in protein modification; protein glycosylation. Functionally, plays a key role in early steps of protein N-linked glycosylation by being involved in the conversion of polyprenol into dolichol. Acts as a polyprenal reductase that mediates the reduction of polyprenal into dolichal in a NADP-dependent mechanism. Dolichols are required for the synthesis of dolichol-linked monosaccharides and the oligosaccharide precursor used for N-glycosylation. The protein is Polyprenal reductase 2 of Oryza sativa subsp. indica (Rice).